An 836-amino-acid chain; its full sequence is Conserved oligomeric Golgi complex subunit 7 (836 aa).

2 coiled-coil regions span residues 29–49 (QDSL…ASEE) and 107–127 (LARV…LQDA). Residues 246–265 (KLANERSESQRLSSGDEFQS) form a disordered region.

It belongs to the COG7 family. Component of the conserved oligomeric Golgi complex which is composed of eight different subunits and is required for normal Golgi morphology and localization. Interacts with COG5 and COG6.

It localises to the golgi apparatus membrane. Required for normal Golgi function. Necessary for embryo development and pigmentation, especially for the expansion of cells and organs, and for the formation of the organized shoot apical meristem (SAM). Probably involved in the generation of the extra-cellular matrix. This Arabidopsis thaliana (Mouse-ear cress) protein is Conserved oligomeric Golgi complex subunit 7.